We begin with the raw amino-acid sequence, 495 residues long: Inner membrane ALBINO3-like protein 1, chloroplastic (495 aa).

A helical transmembrane segment spans residues 76–96 (LGAIYVLADASASTAAAAVMP). The Stromal portion of the chain corresponds to 97–206 (TAVDSAAGAA…VLYEQAGVNP (110 aa)). A helical membrane pass occupies residues 207–227 (LAGCLPTLATIPIFIGLFSSL). Residues 228-273 (TNVANDGLLDTQGFYFVPSLAGPTTMAMRQSGLGTSWLWPLGPDGA) lie on the Lumenal side of the membrane. A helical transmembrane segment spans residues 274–294 (PPIGWEDAAAYLTLPLLLVAV). At 295-317 (QYASSSVTSPPIDPKDENANTQR) the chain is on the stromal side. The helical transmembrane segment at 318–338 (ALLVFLPLMVGWFSLNVPAGL) threads the bilayer. Residues 339–441 (SLYYLANTVL…ASVSLSVDDS (103 aa)) lie on the Lumenal side of the membrane. A helical membrane pass occupies residues 442–462 (TAAIAGTATMAVTAGAPAAAM). At 463 to 495 (DPSKVNRRCKRRRLTSLVQDGSTASAAVAGASA) the chain is on the stromal side.

This sequence belongs to the OXA1/ALB3/YidC (TC 2.A.9.2) family. Associates with the LHCII complex and with the psaE subunit of the LHCI complex.

The protein resides in the plastid. Its subcellular location is the chloroplast thylakoid membrane. In terms of biological role, required for the insertion of some light-harvesting complexes (LHC) proteins into the chloroplast thylakoid membrane. Essential for the assembly and activity of LHC I and II. Its function is probably partly distinct from that of ALB3.2. This chain is Inner membrane ALBINO3-like protein 1, chloroplastic (ALB3.1), found in Chlamydomonas reinhardtii (Chlamydomonas smithii).